Reading from the N-terminus, the 640-residue chain is 1-deoxy-D-xylulose-5-phosphate synthase (640 aa).

Thiamine diphosphate-binding positions include His79 and 120–122 (AHA). A Mg(2+)-binding site is contributed by Asp151. Thiamine diphosphate contacts are provided by residues 152-153 (GS), Asn180, Tyr287, and Glu369. A Mg(2+)-binding site is contributed by Asn180.

This sequence belongs to the transketolase family. DXPS subfamily. As to quaternary structure, homodimer. Mg(2+) is required as a cofactor. The cofactor is thiamine diphosphate.

The enzyme catalyses D-glyceraldehyde 3-phosphate + pyruvate + H(+) = 1-deoxy-D-xylulose 5-phosphate + CO2. It participates in metabolic intermediate biosynthesis; 1-deoxy-D-xylulose 5-phosphate biosynthesis; 1-deoxy-D-xylulose 5-phosphate from D-glyceraldehyde 3-phosphate and pyruvate: step 1/1. In terms of biological role, catalyzes the acyloin condensation reaction between C atoms 2 and 3 of pyruvate and glyceraldehyde 3-phosphate to yield 1-deoxy-D-xylulose-5-phosphate (DXP). The sequence is that of 1-deoxy-D-xylulose-5-phosphate synthase from Hyphomonas neptunium (strain ATCC 15444).